The sequence spans 544 residues: DNA mismatch repair protein MutL (544 aa).

The protein belongs to the DNA mismatch repair MutL/HexB family.

In terms of biological role, this protein is involved in the repair of mismatches in DNA. It is required for dam-dependent methyl-directed DNA mismatch repair. May act as a 'molecular matchmaker', a protein that promotes the formation of a stable complex between two or more DNA-binding proteins in an ATP-dependent manner without itself being part of a final effector complex. In Thermodesulfovibrio yellowstonii (strain ATCC 51303 / DSM 11347 / YP87), this protein is DNA mismatch repair protein MutL.